The primary structure comprises 426 residues: Glutamate-1-semialdehyde 2,1-aminomutase (426 aa).

At Lys265 the chain carries N6-(pyridoxal phosphate)lysine.

It belongs to the class-III pyridoxal-phosphate-dependent aminotransferase family. HemL subfamily. Homodimer. The cofactor is pyridoxal 5'-phosphate.

It localises to the cytoplasm. It carries out the reaction (S)-4-amino-5-oxopentanoate = 5-aminolevulinate. It functions in the pathway porphyrin-containing compound metabolism; protoporphyrin-IX biosynthesis; 5-aminolevulinate from L-glutamyl-tRNA(Glu): step 2/2. This Actinobacillus pleuropneumoniae serotype 5b (strain L20) protein is Glutamate-1-semialdehyde 2,1-aminomutase.